A 751-amino-acid chain; its full sequence is Methionine--tRNA ligase, cytoplasmic (751 aa).

Ser2 bears the N-acetylserine mark. The interval 36–92 (LKPEVDNDNAAMELRNTKEPFLLFDANAILRYVMDDFEGQTSDKYQFALASLQNLLY) is interaction with ARC1. The 'HIGH' region motif lies at 205–215 (PYVNNVPHLGN). An ATP-binding site is contributed by Lys411. Positions 525-529 (KFSKS) match the 'KMSKS' region motif.

This sequence belongs to the class-I aminoacyl-tRNA synthetase family. Component of a yeast aminoacyl-tRNA synthase (aaRS) complex formed by methionyl-tRNA synthase MES1, glutamyl-tRNA synthase GUS1 and the tRNA aminoacylation cofactor ARC1 in a stoichiometric complex. Interacts (via N-ter) with ARC1 (via N-ter). Can also form a stable binary complex with ARC1 that is functional in terms of aminoacylation. ARC1 increases the affinity for cognate tRNAs due to the presence of a tRNA binding domain in the middle and C-terminal part of ARC1.

The protein resides in the cytoplasm. The catalysed reaction is tRNA(Met) + L-methionine + ATP = L-methionyl-tRNA(Met) + AMP + diphosphate. Catalyzes the attachment of methionine to tRNA(Met) in a two-step reaction: methionine is first activated by ATP to form Met-AMP and then transferred to the acceptor end of tRNA(Met). The polypeptide is Methionine--tRNA ligase, cytoplasmic (MES1) (Saccharomyces cerevisiae (strain ATCC 204508 / S288c) (Baker's yeast)).